Reading from the N-terminus, the 286-residue chain is Shikimate dehydrogenase (NADP(+)) (286 aa).

Shikimate contacts are provided by residues 19 to 21 (SLS) and Thr-66. The Proton acceptor role is filled by Lys-70. Shikimate contacts are provided by Asn-91 and Asp-107. Residues 129 to 133 (GSGGA) and Leu-229 contribute to the NADP(+) site. A shikimate-binding site is contributed by Tyr-231. Gly-252 lines the NADP(+) pocket.

This sequence belongs to the shikimate dehydrogenase family. Homodimer.

It carries out the reaction shikimate + NADP(+) = 3-dehydroshikimate + NADPH + H(+). Its pathway is metabolic intermediate biosynthesis; chorismate biosynthesis; chorismate from D-erythrose 4-phosphate and phosphoenolpyruvate: step 4/7. Its function is as follows. Involved in the biosynthesis of the chorismate, which leads to the biosynthesis of aromatic amino acids. Catalyzes the reversible NADPH linked reduction of 3-dehydroshikimate (DHSA) to yield shikimate (SA). This is Shikimate dehydrogenase (NADP(+)) from Prochlorococcus marinus (strain AS9601).